A 180-amino-acid polypeptide reads, in one-letter code: ATP-dependent protease subunit HslV (180 aa).

Thr-8 is a catalytic residue. Positions 165, 168, and 171 each coordinate Na(+).

This sequence belongs to the peptidase T1B family. HslV subfamily. As to quaternary structure, a double ring-shaped homohexamer of HslV is capped on each side by a ring-shaped HslU homohexamer. The assembly of the HslU/HslV complex is dependent on binding of ATP.

The protein localises to the cytoplasm. The enzyme catalyses ATP-dependent cleavage of peptide bonds with broad specificity.. With respect to regulation, allosterically activated by HslU binding. In terms of biological role, protease subunit of a proteasome-like degradation complex believed to be a general protein degrading machinery. In Halalkalibacterium halodurans (strain ATCC BAA-125 / DSM 18197 / FERM 7344 / JCM 9153 / C-125) (Bacillus halodurans), this protein is ATP-dependent protease subunit HslV.